A 159-amino-acid polypeptide reads, in one-letter code: Small ribosomal subunit protein uS9 (159 aa).

The protein belongs to the universal ribosomal protein uS9 family.

The protein is Small ribosomal subunit protein uS9 of Beijerinckia indica subsp. indica (strain ATCC 9039 / DSM 1715 / NCIMB 8712).